Here is a 312-residue protein sequence, read N- to C-terminus: MNILTDPLKLKTSGCADANASKCAEGDGEGSVQVQLDPNVKIGSAKVFSIYGKGGIGKSTTSSNLSVAFSKLGKRVLQIGCDPKHDSTFTLTKRLIPTVIDVLEEVNFHSEELRPEDFVFEGYNGVMCLEAGGPPAGTGCGGYVVGQTVKLLKEHHLLEDTDVVIFDVLGDVVCGGFAAPLQHSERAMIVAANDFDSIFAANRIAAAIQAKSKNYGVRLAGIIANRSRETDQIDKFGAATGIQRVAHLPDLDVIRKSRLKKMTLFEMDHTDEILAVQQEYLRLATEMWEAKTPPVQGKPLKDRDIFDLLGFD.

Residues 55–60 and Lys84 each bind ATP; that span reads GIGKST. Ser59 lines the Mg(2+) pocket. The [4Fe-4S] cluster site is built by Cys140 and Cys174. Residues 225 to 226 and 249 to 251 contribute to the ATP site; these read NR and PDL.

The protein belongs to the NifH/BchL/ChlL family. Homodimer. Protochlorophyllide reductase is composed of three subunits; BchL, BchN and BchB. [4Fe-4S] cluster serves as cofactor.

The catalysed reaction is chlorophyllide a + oxidized 2[4Fe-4S]-[ferredoxin] + 2 ADP + 2 phosphate = protochlorophyllide a + reduced 2[4Fe-4S]-[ferredoxin] + 2 ATP + 2 H2O. Its pathway is porphyrin-containing compound metabolism; bacteriochlorophyll biosynthesis (light-independent). Component of the dark-operative protochlorophyllide reductase (DPOR) that uses Mg-ATP and reduced ferredoxin to reduce ring D of protochlorophyllide (Pchlide) to form chlorophyllide a (Chlide). This reaction is light-independent. The L component serves as a unique electron donor to the NB-component of the complex, and binds Mg-ATP. This Rhodopseudomonas palustris (strain HaA2) protein is Light-independent protochlorophyllide reductase iron-sulfur ATP-binding protein.